Here is a 226-residue protein sequence, read N- to C-terminus: ATP synthase F(0) complex subunit a (226 aa).

6 consecutive transmembrane segments (helical) span residues 6–26 (FASFAAPTILGLPAAVLIILF), 68–88 (WSLMLVSLIIFITTTNLLGLL), 97–117 (QLSMNLAMAIPLWAGAVVMGF), 138–158 (IPMLVIIETISLLIQPMALAV), 164–184 (ITAGHLLMHLIGSATLALSTI), and 189–209 (ALIIFTILILLTILEIAVALI).

It belongs to the ATPase A chain family. In terms of assembly, component of the ATP synthase complex composed at least of ATP5F1A/subunit alpha, ATP5F1B/subunit beta, ATP5MC1/subunit c (homooctomer), MT-ATP6/subunit a, MT-ATP8/subunit 8, ATP5ME/subunit e, ATP5MF/subunit f, ATP5MG/subunit g, ATP5MK/subunit k, ATP5MJ/subunit j, ATP5F1C/subunit gamma, ATP5F1D/subunit delta, ATP5F1E/subunit epsilon, ATP5PF/subunit F6, ATP5PB/subunit b, ATP5PD/subunit d, ATP5PO/subunit OSCP. ATP synthase complex consists of a soluble F(1) head domain (subunits alpha(3) and beta(3)) - the catalytic core - and a membrane F(0) domain - the membrane proton channel (subunits c, a, 8, e, f, g, k and j). These two domains are linked by a central stalk (subunits gamma, delta, and epsilon) rotating inside the F1 region and a stationary peripheral stalk (subunits F6, b, d, and OSCP). Interacts with DNAJC30; interaction is direct.

It is found in the mitochondrion inner membrane. The enzyme catalyses H(+)(in) = H(+)(out). In terms of biological role, subunit a, of the mitochondrial membrane ATP synthase complex (F(1)F(0) ATP synthase or Complex V) that produces ATP from ADP in the presence of a proton gradient across the membrane which is generated by electron transport complexes of the respiratory chain. ATP synthase complex consist of a soluble F(1) head domain - the catalytic core - and a membrane F(1) domain - the membrane proton channel. These two domains are linked by a central stalk rotating inside the F(1) region and a stationary peripheral stalk. During catalysis, ATP synthesis in the catalytic domain of F(1) is coupled via a rotary mechanism of the central stalk subunits to proton translocation. With the subunit c (ATP5MC1), forms the proton-conducting channel in the F(0) domain, that contains two crucial half-channels (inlet and outlet) that facilitate proton movement from the mitochondrial intermembrane space (IMS) into the matrix. Protons are taken up via the inlet half-channel and released through the outlet half-channel, following a Grotthuss mechanism. This is ATP synthase F(0) complex subunit a from Pan troglodytes (Chimpanzee).